A 186-amino-acid chain; its full sequence is Translation initiation factor IF-3 (186 aa).

The interval Met-1 to Arg-21 is disordered.

The protein belongs to the IF-3 family. As to quaternary structure, monomer.

The protein localises to the cytoplasm. In terms of biological role, IF-3 binds to the 30S ribosomal subunit and shifts the equilibrium between 70S ribosomes and their 50S and 30S subunits in favor of the free subunits, thus enhancing the availability of 30S subunits on which protein synthesis initiation begins. This chain is Translation initiation factor IF-3, found in Borrelia turicatae (strain 91E135).